Consider the following 1167-residue polypeptide: Non-toxic nonhemagglutinin (1167 aa).

The light chain nLC stretch occupies residues 1-381; sequence MDIIDNVDIT…PQQIINLIDN (381 aa). An N-heavy chain nHN region spans residues 382–804; that stretch reads NNILLIKSYI…LFNSKIQLTI (423 aa). The tract at residues 805-1167 is C-heavy chain nHC; sequence KNEKPEYNLL…LNDIYSWTLI (363 aa).

The protein belongs to the botulism non-toxic nonhemagglutinin family.

Expression of the ptox operon (ntnh-orfX1-orfX2-orfX3-pmp1) in B.thuringiensis kills Anopheles but not Aedes mosquito 3rd instar larvae. The ntnh-pmp1 construct is about half as toxic. This is Non-toxic nonhemagglutinin from Paraclostridium bifermentans (Clostridium bifermentans).